Reading from the N-terminus, the 392-residue chain is ATP phosphoribosyltransferase regulatory subunit (392 aa).

It belongs to the class-II aminoacyl-tRNA synthetase family. HisZ subfamily. As to quaternary structure, heteromultimer composed of HisG and HisZ subunits.

Its subcellular location is the cytoplasm. It functions in the pathway amino-acid biosynthesis; L-histidine biosynthesis; L-histidine from 5-phospho-alpha-D-ribose 1-diphosphate: step 1/9. Required for the first step of histidine biosynthesis. May allow the feedback regulation of ATP phosphoribosyltransferase activity by histidine. The polypeptide is ATP phosphoribosyltransferase regulatory subunit (Geobacillus sp. (strain WCH70)).